The sequence spans 585 residues: Pyruvate kinase (585 aa).

Position 32 (Arg-32) interacts with substrate. Asn-34, Ser-36, Asp-66, and Thr-67 together coordinate K(+). 34 to 37 lines the ATP pocket; the sequence is NFSH. Arg-73 and Lys-156 together coordinate ATP. Residue Glu-221 participates in Mg(2+) binding. Substrate-binding residues include Gly-244, Asp-245, and Thr-277. Asp-245 contributes to the Mg(2+) binding site.

Belongs to the pyruvate kinase family. It in the C-terminal section; belongs to the PEP-utilizing enzyme family. It depends on Mg(2+) as a cofactor. Requires K(+) as cofactor.

The enzyme catalyses pyruvate + ATP = phosphoenolpyruvate + ADP + H(+). The protein operates within carbohydrate degradation; glycolysis; pyruvate from D-glyceraldehyde 3-phosphate: step 5/5. This is Pyruvate kinase (pyk) from Staphylococcus aureus (strain USA300).